A 101-amino-acid polypeptide reads, in one-letter code: Small ribosomal subunit protein uS14 (101 aa).

It belongs to the universal ribosomal protein uS14 family. As to quaternary structure, part of the 30S ribosomal subunit. Contacts proteins S3 and S10.

Its function is as follows. Binds 16S rRNA, required for the assembly of 30S particles and may also be responsible for determining the conformation of the 16S rRNA at the A site. The chain is Small ribosomal subunit protein uS14 from Paenarthrobacter aurescens (strain TC1).